Reading from the N-terminus, the 129-residue chain is QECKCHGLSGSCTFTTCWKKMPHFREVGDRLLERFNGAFKVMGGNDGKTIIPVGHNIKPPDKQDLIYSAESPDFCQANRKTGSPGTRGRVCNSTALDVGGCDLLCCGRGQREETVVVEENCLCRFHWCC.

Intrachain disulfides connect Cys-3–Cys-17, Cys-5–Cys-12, Cys-75–Cys-106, Cys-91–Cys-101, and Cys-128–Cys-129. Ser-9 is lipidated: O-palmitoleoyl serine; by PORCN. A glycan (N-linked (GlcNAc...) asparagine) is linked at Asn-92.

The protein belongs to the Wnt family. Palmitoleoylation is required for efficient binding to frizzled receptors. Depalmitoleoylation leads to Wnt signaling pathway inhibition. In terms of tissue distribution, at tailbud: dorsal, punctate; in adult: brain and heart.

It localises to the secreted. The protein resides in the extracellular space. Its subcellular location is the extracellular matrix. Ligand for members of the frizzled family of seven transmembrane receptors. Probable developmental protein. May be a signaling molecule which affects the development of discrete regions of tissues. Is likely to signal over only few cell diameters. The protein is Protein Wnt-6 (wnt6) of Xenopus laevis (African clawed frog).